The following is a 130-amino-acid chain: Cholecystokinin (130 aa).

The first 20 residues, 1–20 (MYIGICICVLLAALSASSTG), serve as a signal peptide directing secretion. Positions 21–60 (QQTVGSMNEDPGAREIEQQNILQHPRHIRASSSAQLKPFQ) are excised as a propeptide. Tyr112 carries the sulfotyrosine modification. Phe118 carries the phenylalanine amide modification. The propeptide occupies 122–130 (SAEEYEYSS). 2 positions are modified to sulfotyrosine: Tyr126 and Tyr128.

It belongs to the gastrin/cholecystokinin family. In terms of processing, the precursor is cleaved by proteases to produce a number of active cholecystokinins. Expressed in brain, lung, testis and throughout the length of the small intestine. In the brain, expressed predominantly in the optic tectum and brain stem.

The protein localises to the secreted. Its function is as follows. This peptide hormone induces gall bladder contraction and the release of pancreatic enzymes in the gut. Its function in the brain is not clear. The sequence is that of Cholecystokinin (CCK) from Aquarana catesbeiana (American bullfrog).